Here is a 348-residue protein sequence, read N- to C-terminus: Photosystem II protein D1 (348 aa).

3 helical membrane passes run Y33–V50, H122–F137, and W146–A160. Chlorophyll a is bound at residue H122. Y130 is a binding site for pheophytin a. [CaMn4O5] cluster-binding residues include D174 and E193. The chain crosses the membrane as a helical span at residues F201–L222. H202 is a chlorophyll a binding site. A quinone is bound by residues H219 and S268–F269. A Fe cation-binding site is contributed by H219. A Fe cation-binding site is contributed by H276. Residues F278 to L292 traverse the membrane as a helical segment. The [CaMn4O5] cluster site is built by H336, E337, D346, and A348.

This sequence belongs to the reaction center PufL/M/PsbA/D family. PSII is composed of 1 copy each of membrane proteins PsbA, PsbB, PsbC, PsbD, PsbE, PsbF, PsbH, PsbI, PsbJ, PsbK, PsbL, PsbM, PsbT, PsbX, PsbY, PsbZ, Psb30/Ycf12, at least 3 peripheral proteins of the oxygen-evolving complex and a large number of cofactors. It forms dimeric complexes. The D1/D2 heterodimer binds P680, chlorophylls that are the primary electron donor of PSII, and subsequent electron acceptors. It shares a non-heme iron and each subunit binds pheophytin, quinone, additional chlorophylls, carotenoids and lipids. D1 provides most of the ligands for the Mn4-Ca-O5 cluster of the oxygen-evolving complex (OEC). There is also a Cl(-1) ion associated with D1 and D2, which is required for oxygen evolution. The PSII complex binds additional chlorophylls, carotenoids and specific lipids. is required as a cofactor. Tyr-165 forms a radical intermediate that is referred to as redox-active TyrZ, YZ or Y-Z.

The protein resides in the plastid. It localises to the chloroplast thylakoid membrane. The catalysed reaction is 2 a plastoquinone + 4 hnu + 2 H2O = 2 a plastoquinol + O2. Functionally, photosystem II (PSII) is a light-driven water:plastoquinone oxidoreductase that uses light energy to abstract electrons from H(2)O, generating O(2) and a proton gradient subsequently used for ATP formation. It consists of a core antenna complex that captures photons, and an electron transfer chain that converts photonic excitation into a charge separation. The D1/D2 (PsbA/PsbD) reaction center heterodimer binds P680, the primary electron donor of PSII as well as several subsequent electron acceptors. In Heterocapsa triquetra (Dinoflagellate), this protein is Photosystem II protein D1.